The following is a 261-amino-acid chain: Zinc finger protein 664 (261 aa).

C2H2-type zinc fingers lie at residues 3–25 (YKCP…QKVH), 31–53 (HKCD…WRDH), 59–81 (YKCD…KKIH), 87–109 (YKCY…MRVH), 115–137 (YVCS…QRVH), 143–165 (FKCE…QRVH), 171–193 (YKCY…QRVH), 199–221 (YRCC…QRVH), and 227–249 (FKCD…QRVH). Lysine 257 is covalently cross-linked (Glycyl lysine isopeptide (Lys-Gly) (interchain with G-Cter in SUMO2)).

The protein belongs to the krueppel C2H2-type zinc-finger protein family. Expressed in the organ of Corti, stria vascularis, auditory nerve and retina. Lower levels in the tongue, cerebellum, small intestine and kidney.

The protein localises to the nucleus. Its function is as follows. May be involved in transcriptional regulation. The protein is Zinc finger protein 664 (ZNF664) of Cavia porcellus (Guinea pig).